Here is a 97-residue protein sequence, read N- to C-terminus: Class II hydrophobin A (97 aa).

The first 15 residues, 1 to 15, serve as a signal peptide directing secretion; it reads MKSVVFASLIASALA. Intrachain disulfides connect Cys-30/Cys-79, Cys-40/Cys-53, and Cys-80/Cys-91.

Belongs to the cerato-ulmin hydrophobin family.

The protein resides in the secreted. It is found in the cell wall. It localises to the vacuole. The protein localises to the cytoplasmic vesicle. Functionally, aerial growth, conidiation, and dispersal of filamentous fungi in the environment rely upon a capability of their secreting small amphipathic proteins called hydrophobins (HPBs) with low sequence identity. Class I can self-assemble into an outermost layer of rodlet bundles on aerial cell surfaces, conferring cellular hydrophobicity that supports fungal growth, development and dispersal; whereas Class II form highly ordered films at water-air interfaces through intermolecular interactions but contribute nothing to the rodlet structure. Hyd2A contributes to certain cell wall-related features, such as hydrophobicity but is not involved in cell wall-related events during fungal proliferation in host hemocoel. Does not contribute to conidial hydrophobicity. Involved in insect hemocoel colonization independent of cell hydrophobicity, as well as in the asexual development. The protein is Class II hydrophobin A of Beauveria bassiana (strain ARSEF 2860) (White muscardine disease fungus).